Here is a 485-residue protein sequence, read N- to C-terminus: Auxin transporter protein 1 (485 aa).

Residues 1–59 (MSEGVEAIVANDNGTDQVNGNRTGKDNEEHDGSTGSNLSNFLWHGGSVWDAWFSCASNQ) lie on the Cytoplasmic side of the membrane. Polar residues predominate over residues 12 to 22 (DNGTDQVNGNR). The interval 12–33 (DNGTDQVNGNRTGKDNEEHDGS) is disordered. The segment covering 23 to 32 (TGKDNEEHDG) has biased composition (basic and acidic residues). A helical transmembrane segment spans residues 60-77 (VAQVLLTLPYSFSQLGML). The Extracellular portion of the chain corresponds to 78–79 (SG). The helical transmembrane segment at 80–100 (IVLQIFYGLLGSWTAYLISVL) threads the bilayer. The Cytoplasmic segment spans residues 101–135 (YVEYRARKEKEGKSFKNHVIQWFEVLDGLLGSYWK). Residues 136-156 (ALGLAFNCTFLLFGSVIQLIA) form a helical membrane-spanning segment. The Extracellular segment spans residues 157–172 (CASNIYYINDHLDKRT). A helical membrane pass occupies residues 173-193 (WTYIFGACCATTVFIPSFHNY). Topologically, residues 194-196 (RIW) are cytoplasmic. A helical transmembrane segment spans residues 197-217 (SFLGLGMTTYTAWYLAIASII). Residues 218–232 (HGQAEGVKHSGPTKL) are Extracellular-facing. A helical membrane pass occupies residues 233 to 253 (VLYFTGATNILYTFGGHAVTV). Topologically, residues 254–266 (EIMHAMWKPQKFK) are cytoplasmic. A helical transmembrane segment spans residues 267–287 (YIYLMATLYVFTLTIPSAAAV). Topologically, residues 288–314 (YWAFGDALLDHSNAFSLMPKNAWRDAA) are extracellular. The chain crosses the membrane as a helical span at residues 315–335 (VILMLIHQFITFGFACTPLYF). Residues 336–356 (VWEKVIGMHDTKSICLRALAR) lie on the Cytoplasmic side of the membrane. The helical transmembrane segment at 357–377 (LPVVIPIWFLAIIFPFFGPIN) threads the bilayer. Residue S378 is a topological domain, extracellular. Residues 379–399 (AVGALLVSFTVYIIPSLAHML) traverse the membrane as a helical segment. The Cytoplasmic segment spans residues 400 to 425 (TYRSASARQNAAEKPPFFMPSWTAMY). Residues 426 to 446 (VLNAFVVVWVLIVGFGFGGWA) traverse the membrane as a helical segment. Residues 447–485 (SVTNFVRQVDTFGLFAKCYQCKPAAAAAHAPVSALHHRL) are Extracellular-facing.

The protein belongs to the amino acid/polyamine transporter 2 family. Amino acid/auxin permease (AAAP) (TC 2.A.18.1) subfamily. In terms of tissue distribution, expressed in root and shoot apical tissues. In root apex, confined to stele initials, protophloem poles, statolith-containing S2 columella cells, lateral root cap cells (LRC), and in epidermal cells from the distal elongation zone (DEZ) up to central elongation zone (CEZ).

The protein resides in the cell membrane. Auxin uptake mediated by AUX1 is inhibited by chromosaponin-1 (CSI), 1-naphthoxyacetic acid (1-NOA) and 3-chloro-4-hydroxyphenylacetic acid (CHPAA). Carrier protein involved in proton-driven auxin influx. Mediates the formation of auxin gradient from developing leaves (site of auxin biosynthesis) to tips by contributing to the loading of auxin in vascular tissues and facilitating acropetal (base to tip) auxin transport within inner tissues of the root apex, and basipetal (tip to base) auxin transport within outer tissues of the root apex. Unloads auxin from the mature phloem to deliver the hormone to the root meristem via the protophloem cell files. Coordinated subcellular localization of AUX1 is regulated by a brefeldin A-sensitive (BFA) vesicle trafficking process. Involved in lateral root formation, trichoblast polarization and root hair elongation. Required for gravitropism and thigmotropism, especially in roots, by modulating responses to auxin, ethylene and cytokinins such as benzyladenine (BA). Needed for ammonium-mediated root-growth inhibition. Confers sensitivity to the herbicide 2,4-dichlorophenoxyacetic acid (2,4-D, auxin analog), and to polar auxin transport inhibitors such as N-1-naphthylphthalamic acid (NPA) and 2,3,5-triiodobenzoic acid (TIBA). This chain is Auxin transporter protein 1 (AUX1), found in Arabidopsis thaliana (Mouse-ear cress).